We begin with the raw amino-acid sequence, 242 residues long: Ubiquinone biosynthesis O-methyltransferase (242 aa).

Arginine 44, glycine 64, aspartate 85, and methionine 129 together coordinate S-adenosyl-L-methionine.

The protein belongs to the methyltransferase superfamily. UbiG/COQ3 family.

The enzyme catalyses a 3-demethylubiquinol + S-adenosyl-L-methionine = a ubiquinol + S-adenosyl-L-homocysteine + H(+). It carries out the reaction a 3-(all-trans-polyprenyl)benzene-1,2-diol + S-adenosyl-L-methionine = a 2-methoxy-6-(all-trans-polyprenyl)phenol + S-adenosyl-L-homocysteine + H(+). The protein operates within cofactor biosynthesis; ubiquinone biosynthesis. Functionally, O-methyltransferase that catalyzes the 2 O-methylation steps in the ubiquinone biosynthetic pathway. The protein is Ubiquinone biosynthesis O-methyltransferase of Salmonella choleraesuis (strain SC-B67).